A 321-amino-acid polypeptide reads, in one-letter code: Lipoyl synthase (321 aa).

7 residues coordinate [4Fe-4S] cluster: cysteine 60, cysteine 65, cysteine 71, cysteine 86, cysteine 90, cysteine 93, and serine 299. The Radical SAM core domain maps to 72–288; sequence WEKKHATFMI…ETIGRTKGFL (217 aa).

This sequence belongs to the radical SAM superfamily. Lipoyl synthase family. The cofactor is [4Fe-4S] cluster.

The protein localises to the cytoplasm. The enzyme catalyses [[Fe-S] cluster scaffold protein carrying a second [4Fe-4S](2+) cluster] + N(6)-octanoyl-L-lysyl-[protein] + 2 oxidized [2Fe-2S]-[ferredoxin] + 2 S-adenosyl-L-methionine + 4 H(+) = [[Fe-S] cluster scaffold protein] + N(6)-[(R)-dihydrolipoyl]-L-lysyl-[protein] + 4 Fe(3+) + 2 hydrogen sulfide + 2 5'-deoxyadenosine + 2 L-methionine + 2 reduced [2Fe-2S]-[ferredoxin]. Its pathway is protein modification; protein lipoylation via endogenous pathway; protein N(6)-(lipoyl)lysine from octanoyl-[acyl-carrier-protein]: step 2/2. In terms of biological role, catalyzes the radical-mediated insertion of two sulfur atoms into the C-6 and C-8 positions of the octanoyl moiety bound to the lipoyl domains of lipoate-dependent enzymes, thereby converting the octanoylated domains into lipoylated derivatives. The sequence is that of Lipoyl synthase from Mesorhizobium japonicum (strain LMG 29417 / CECT 9101 / MAFF 303099) (Mesorhizobium loti (strain MAFF 303099)).